Reading from the N-terminus, the 437-residue chain is La-related protein 7 homolog (437 aa).

An HTH La-type RNA-binding domain is found at 38–145 (SKSPSLTIPK…KRKKKFDNRT (108 aa)). The xRRM domain occupies 279-397 (ELSQSCFLKI…QRSSIDEIKA (119 aa)). A compositionally biased stretch (basic residues) spans 417–427 (RRPVSKRKNKA). The disordered stretch occupies residues 417–437 (RRPVSKRKNKAINKMSTEVKK).

It belongs to the LARP7 family. In terms of assembly, component of the telomerase holoenzyme complex composed minimally of the catalytic subunit p123 and the telomerase RNA template component. Post-translationally, the mature form of the protein is a protein of 43 kDa, which is derived from a 51 kDa precursor by proteolytic cleavage.

It localises to the nucleus. The protein localises to the chromosome. Its subcellular location is the telomere. RNA-binding protein required for assembly of the holoenzyme telomerase ribonucleoprotein (RNP) complex. Specifically binds telomerase RNA and promotes its assembly with catalytic subunit p123, thereby stimulating enzymatic activity and processivity of p123. Telomerase is a ribonucleoprotein enzyme essential that copies new telomeric repeats onto chromosome ends and functions to maintain cell division. The polypeptide is La-related protein 7 homolog (Euplotes aediculatus (Ciliate)).